A 136-amino-acid polypeptide reads, in one-letter code: MITDPIADMLARIKNAQAARKSEVYIPHSKIKEKIAQILKKEGYIEDYTISEENKKGNQGTLIIKIKYLDNRNTKPAISGLRRVSKPGLRKYVGADEIPYVRKGLGIAILSTNKGILTDAEARKEKVGGEVLCYVW.

It belongs to the universal ribosomal protein uS8 family. As to quaternary structure, part of the 30S ribosomal subunit. Contacts proteins S5 and S12.

Functionally, one of the primary rRNA binding proteins, it binds directly to 16S rRNA central domain where it helps coordinate assembly of the platform of the 30S subunit. The chain is Small ribosomal subunit protein uS8 from Persephonella marina (strain DSM 14350 / EX-H1).